Reading from the N-terminus, the 207-residue chain is High frequency lysogenization protein HflD homolog (207 aa).

This sequence belongs to the HflD family.

It is found in the cytoplasm. The protein resides in the cell inner membrane. In Pseudomonas fluorescens (strain SBW25), this protein is High frequency lysogenization protein HflD homolog.